The sequence spans 217 residues: Cytidylate kinase (217 aa).

10–18 is an ATP binding site; that stretch reads GPAGAGKST.

This sequence belongs to the cytidylate kinase family. Type 1 subfamily.

The protein localises to the cytoplasm. It catalyses the reaction CMP + ATP = CDP + ADP. The catalysed reaction is dCMP + ATP = dCDP + ADP. This chain is Cytidylate kinase, found in Clostridium botulinum (strain ATCC 19397 / Type A).